Consider the following 47-residue polypeptide: Delta-actitoxin-Axm1g (47 aa).

3 disulfide bridges follow: Cys-4/Cys-44, Cys-6/Cys-34, and Cys-27/Cys-45.

This sequence belongs to the sea anemone sodium channel inhibitory toxin family. Type I subfamily.

It is found in the secreted. The protein resides in the nematocyst. The chain is Delta-actitoxin-Axm1g from Anthopleura xanthogrammica (Giant green sea anemone).